Reading from the N-terminus, the 305-residue chain is Protoheme IX farnesyltransferase (305 aa).

Transmembrane regions (helical) follow at residues 28 to 48 (VVLL…PGIV), 52 to 72 (VFLF…AINH), 102 to 122 (IFAA…VNLL), 123 to 143 (TALL…LYLK), 150 to 170 (IVIG…AVTG), 176 to 196 (ALIL…ALAI), 221 to 241 (INIL…FVIM), 243 to 263 (SGWI…YWAI), and 282 to 302 (IWYL…YLAL).

It belongs to the UbiA prenyltransferase family. Protoheme IX farnesyltransferase subfamily.

It localises to the cell inner membrane. It carries out the reaction heme b + (2E,6E)-farnesyl diphosphate + H2O = Fe(II)-heme o + diphosphate. It participates in porphyrin-containing compound metabolism; heme O biosynthesis; heme O from protoheme: step 1/1. In terms of biological role, converts heme B (protoheme IX) to heme O by substitution of the vinyl group on carbon 2 of heme B porphyrin ring with a hydroxyethyl farnesyl side group. The protein is Protoheme IX farnesyltransferase of Coxiella burnetii (strain CbuK_Q154) (Coxiella burnetii (strain Q154)).